Reading from the N-terminus, the 199-residue chain is Imidazoleglycerol-phosphate dehydratase (199 aa).

Belongs to the imidazoleglycerol-phosphate dehydratase family.

It localises to the cytoplasm. It carries out the reaction D-erythro-1-(imidazol-4-yl)glycerol 3-phosphate = 3-(imidazol-4-yl)-2-oxopropyl phosphate + H2O. The protein operates within amino-acid biosynthesis; L-histidine biosynthesis; L-histidine from 5-phospho-alpha-D-ribose 1-diphosphate: step 6/9. The protein is Imidazoleglycerol-phosphate dehydratase of Acidithiobacillus ferrooxidans (strain ATCC 53993 / BNL-5-31) (Leptospirillum ferrooxidans (ATCC 53993)).